The sequence spans 229 residues: Large ribosomal subunit protein uL1 (229 aa).

Belongs to the universal ribosomal protein uL1 family. As to quaternary structure, part of the 50S ribosomal subunit.

In terms of biological role, binds directly to 23S rRNA. The L1 stalk is quite mobile in the ribosome, and is involved in E site tRNA release. Its function is as follows. Protein L1 is also a translational repressor protein, it controls the translation of the L11 operon by binding to its mRNA. The sequence is that of Large ribosomal subunit protein uL1 from Streptococcus agalactiae serotype Ia (strain ATCC 27591 / A909 / CDC SS700).